The primary structure comprises 293 residues: MAYHSGYGAHGSKHRARAAPDPPPLFDDTSGGYSSQPGGYPATGADVAFSVNHLLGDPMANVAMAYGSSIASHGKDMVHKELHRFVSVSKLKYFFAVDTAYVAKKLGLLVFPYTHQNWEVQYSRDAPLPPRQDLNAPDLYIPTMAFITYVLLAGMALGIQKRFSPEVLGLCASTALVWVVMEVLALLLGLYLATVRSDLSTFHLLAYSGYKYVGMILSVLTGLLFGSDGYYVALAWTSSALMYFIVRSLRTAALGPDSMGGPVPRQRLQLYLTLGAAAFQPLIIYWLTFHLVR.

A disordered region spans residues 1 to 33 (MAYHSGYGAHGSKHRARAAPDPPPLFDDTSGGY). At Ala-2 the chain carries N-acetylalanine. Topologically, residues 2 to 138 (AYHSGYGAHG…PPRQDLNAPD (137 aa)) are cytoplasmic. Ser-12 bears the Phosphoserine mark. A helical transmembrane segment spans residues 139–159 (LYIPTMAFITYVLLAGMALGI). Residues 160–174 (QKRFSPEVLGLCAST) lie on the Lumenal side of the membrane. The helical transmembrane segment at 175-195 (ALVWVVMEVLALLLGLYLATV) threads the bilayer. The Cytoplasmic segment spans residues 196 to 203 (RSDLSTFH). Residues 204 to 226 (LLAYSGYKYVGMILSVLTGLLFG) form a helical membrane-spanning segment. At 227–229 (SDG) the chain is on the lumenal side. A helical transmembrane segment spans residues 230–249 (YYVALAWTSSALMYFIVRSL). Residues 250-271 (RTAALGPDSMGGPVPRQRLQLY) are Cytoplasmic-facing. A helical transmembrane segment spans residues 272–292 (LTLGAAAFQPLIIYWLTFHLV).

This sequence belongs to the YIF1 family. In terms of assembly, interacts with YIPF5.

It localises to the endoplasmic reticulum membrane. The protein localises to the golgi apparatus membrane. It is found in the endoplasmic reticulum-Golgi intermediate compartment membrane. Possible role in transport between endoplasmic reticulum and Golgi. The sequence is that of Protein YIF1A (YIF1A) from Homo sapiens (Human).